We begin with the raw amino-acid sequence, 1029 residues long: U2 snRNP-associated SURP motif-containing protein (1029 aa).

2 disordered regions span residues 1–110 (MADK…KEDE) and 141–273 (VNAA…DPST). A2 carries the N-acetylalanine modification. The span at 7–16 (GGSQKASSKN) shows a compositional bias: polar residues. A compositionally biased stretch (basic residues) spans 45 to 54 (TRPKSPRKHN). Basic and acidic residues predominate over residues 55 to 64 (YRNESSRESL). The residue at position 67 (S67) is a Phosphoserine. K80 is covalently cross-linked (Glycyl lysine isopeptide (Lys-Gly) (interchain with G-Cter in SUMO2)). Residues 92 to 121 (AKRTLSKKEQEELKKKEDEKAAAEIYEEFL) are a coiled coil. Basic and acidic residues-rich tracts occupy residues 97 to 110 (SKKEQEELKKKEDE) and 144 to 155 (AKDEHETDEKRG). Residues K145 and K168 each participate in a glycyl lysine isopeptide (Lys-Gly) (interchain with G-Cter in SUMO2) cross-link. Polar residues predominate over residues 169 to 178 (NPPNQSSNER). Positions 186-222 (ETKKPPLKKGEKEKKKSNLELFKEELKQIQEERDERH) are enriched in basic and acidic residues. The stretch at 192–232 (LKKGEKEKKKSNLELFKEELKQIQEERDERHKTKGRLSRFE) forms a coiled coil. S202 carries the post-translational modification Phosphoserine. K208 is covalently cross-linked (Glycyl lysine isopeptide (Lys-Gly) (interchain with G-Cter in SUMO2)). Phosphoserine is present on S236. Residues 239–249 (DGQRRSMDVPS) are compositionally biased toward basic and acidic residues. An RRM domain is found at 274 to 355 (TNLYLGNINP…FEMKLGWGKA (82 aa)). One copy of the SURP motif repeat lies at 430–473 (LIHRMIEFVVREGPMFEAMIMNREINNPMFRFLFENQTPAHVYY). S485 bears the Phosphoserine mark. The CID domain maps to 534–679 (LKEEQRDKLE…KLQNIFLGLV (146 aa)). The disordered stretch occupies residues 704–729 (DGAPLEDVDGIPIDATPIDDLDGVPI). T719 bears the Phosphothreonine mark. Residues K748 and K749 each participate in a glycyl lysine isopeptide (Lys-Gly) (interchain with G-Cter in SUMO2) cross-link. Position 760 is an N6-acetyllysine; alternate (K760). K760 is covalently cross-linked (Glycyl lysine isopeptide (Lys-Gly) (interchain with G-Cter in SUMO2); alternate). Disordered regions lie at residues 778–841 (KWEL…EEKR) and 855–1029 (QDEL…KNKH). Positions 786-806 (EESEEEENQNQEEESEDEEDT) are enriched in acidic residues. S788, S800, and S811 each carry phosphoserine. Basic and acidic residues-rich tracts occupy residues 810-841 (KSEEHHLYSNPVREEATESKFSKYSEMSEEKR) and 874-922 (QVEH…TPTR). Residues K829 and K832 each participate in a glycyl lysine isopeptide (Lys-Gly) (interchain with G-Cter in SUMO2) cross-link. Residues 837 to 915 (SEEKRAKLRE…ESRSKDKKEK (79 aa)) are a coiled coil. The residue at position 931 (T931) is a Phosphothreonine. Phosphoserine is present on residues S946 and S948. Positions 950–980 (KSERSERSERSHKESSRSRSSHKDSPRDASK) are enriched in basic and acidic residues. The segment covering 991 to 1029 (TPKRSRRSRSRSPKKSGKKSRSQSRSPHRSHKKSKKNKH) has biased composition (basic residues).

It belongs to the splicing factor SR family. As to quaternary structure, interacts with ERBB4.

The protein resides in the nucleus. In Mus musculus (Mouse), this protein is U2 snRNP-associated SURP motif-containing protein (U2surp).